Consider the following 351-residue polypeptide: Magnesium-protoporphyrin IX monomethyl ester [oxidative] cyclase 1 (351 aa).

This sequence belongs to the AcsF family. Requires Fe cation as cofactor.

It carries out the reaction Mg-protoporphyrin IX 13-monomethyl ester + 3 NADPH + 3 O2 + 2 H(+) = 3,8-divinyl protochlorophyllide a + 3 NADP(+) + 5 H2O. The protein operates within porphyrin-containing compound metabolism; chlorophyll biosynthesis (light-independent). In terms of biological role, catalyzes the formation of the isocyclic ring in chlorophyll biosynthesis. Mediates the cyclase reaction, which results in the formation of divinylprotochlorophyllide (Pchlide) characteristic of all chlorophylls from magnesium-protoporphyrin IX 13-monomethyl ester (MgPMME). This is Magnesium-protoporphyrin IX monomethyl ester [oxidative] cyclase 1 from Nostoc sp. (strain PCC 7120 / SAG 25.82 / UTEX 2576).